The following is a 514-amino-acid chain: Protein nucleotidyltransferase YdiU (514 aa).

ATP contacts are provided by Gly111, Gly113, Arg114, Lys134, Asp146, Gly147, Arg197, and Arg204. The active-site Proton acceptor is Asp276. Asn277 and Asp286 together coordinate Mg(2+). Residue Asp286 participates in ATP binding.

The protein belongs to the SELO family. Mg(2+) is required as a cofactor. It depends on Mn(2+) as a cofactor.

It carries out the reaction L-seryl-[protein] + ATP = 3-O-(5'-adenylyl)-L-seryl-[protein] + diphosphate. The catalysed reaction is L-threonyl-[protein] + ATP = 3-O-(5'-adenylyl)-L-threonyl-[protein] + diphosphate. It catalyses the reaction L-tyrosyl-[protein] + ATP = O-(5'-adenylyl)-L-tyrosyl-[protein] + diphosphate. The enzyme catalyses L-histidyl-[protein] + UTP = N(tele)-(5'-uridylyl)-L-histidyl-[protein] + diphosphate. It carries out the reaction L-seryl-[protein] + UTP = O-(5'-uridylyl)-L-seryl-[protein] + diphosphate. The catalysed reaction is L-tyrosyl-[protein] + UTP = O-(5'-uridylyl)-L-tyrosyl-[protein] + diphosphate. Functionally, nucleotidyltransferase involved in the post-translational modification of proteins. It can catalyze the addition of adenosine monophosphate (AMP) or uridine monophosphate (UMP) to a protein, resulting in modifications known as AMPylation and UMPylation. The chain is Protein nucleotidyltransferase YdiU from Rhodococcus jostii (strain RHA1).